Reading from the N-terminus, the 152-residue chain is Proteolipid protein 2 (152 aa).

Positions 19 to 137 (FSRTRKGILL…DAYFTFPLRQ (119 aa)) constitute an MARVEL domain. Transmembrane regions (helical) follow at residues 25 to 45 (GILL…FSAG), 48 to 68 (GYSS…VIYM), and 85 to 105 (FFRT…VLVE). Asn108 carries N-linked (GlcNAc...) asparagine glycosylation. The helical transmembrane segment at 112-132 (IAAGVLGLLATCLFGYDAYFT) threads the bilayer.

The protein localises to the membrane. Its function is as follows. May play a role in cell differentiation in the intestinal epithelium. The protein is Proteolipid protein 2 (PLP2) of Oryctolagus cuniculus (Rabbit).